The sequence spans 624 residues: Chaperone protein HtpG (624 aa).

The interval 1–336 (MKGQETRGFQ…SNDLPLNVSR (336 aa)) is a; substrate-binding. Positions 337 to 552 (EILQDSTVTR…ADEMSTQMAK (216 aa)) are b. A c region spans residues 553-624 (LFAAAGQSVP…IRRMNQLLVS (72 aa)).

This sequence belongs to the heat shock protein 90 family. As to quaternary structure, homodimer.

Its subcellular location is the cytoplasm. Molecular chaperone. Has ATPase activity. This Salmonella paratyphi B (strain ATCC BAA-1250 / SPB7) protein is Chaperone protein HtpG.